The primary structure comprises 201 residues: Large ribosomal subunit protein uL4 (201 aa).

A disordered region spans residues 44 to 71 (RAQKTRAEVSGSGKKPWRQKGTGRARSG).

This sequence belongs to the universal ribosomal protein uL4 family. As to quaternary structure, part of the 50S ribosomal subunit.

Its function is as follows. One of the primary rRNA binding proteins, this protein initially binds near the 5'-end of the 23S rRNA. It is important during the early stages of 50S assembly. It makes multiple contacts with different domains of the 23S rRNA in the assembled 50S subunit and ribosome. Functionally, forms part of the polypeptide exit tunnel. The polypeptide is Large ribosomal subunit protein uL4 (Photorhabdus laumondii subsp. laumondii (strain DSM 15139 / CIP 105565 / TT01) (Photorhabdus luminescens subsp. laumondii)).